The sequence spans 377 residues: Nitric oxide reductase FlRd-NAD(+) reductase (377 aa).

Belongs to the FAD-dependent oxidoreductase family. It depends on FAD as a cofactor.

The protein resides in the cytoplasm. It catalyses the reaction 2 reduced [nitric oxide reductase rubredoxin domain] + NAD(+) + H(+) = 2 oxidized [nitric oxide reductase rubredoxin domain] + NADH. It participates in nitrogen metabolism; nitric oxide reduction. Functionally, one of at least two accessory proteins for anaerobic nitric oxide (NO) reductase. Reduces the rubredoxin moiety of NO reductase. In Klebsiella pneumoniae subsp. pneumoniae (strain ATCC 700721 / MGH 78578), this protein is Nitric oxide reductase FlRd-NAD(+) reductase.